The sequence spans 782 residues: Endonuclease MutS2 (782 aa).

336–343 serves as a coordination point for ATP; that stretch reads GPNTGGKT. Positions 707–782 constitute a Smr domain; the sequence is LDLRGYRYDE…GFGVTVVEIK (76 aa).

Belongs to the DNA mismatch repair MutS family. MutS2 subfamily. Homodimer. Binds to stalled ribosomes, contacting rRNA.

Endonuclease that is involved in the suppression of homologous recombination and thus may have a key role in the control of bacterial genetic diversity. Functionally, acts as a ribosome collision sensor, splitting the ribosome into its 2 subunits. Detects stalled/collided 70S ribosomes which it binds and splits by an ATP-hydrolysis driven conformational change. Acts upstream of the ribosome quality control system (RQC), a ribosome-associated complex that mediates the extraction of incompletely synthesized nascent chains from stalled ribosomes and their subsequent degradation. Probably generates substrates for RQC. In Staphylococcus saprophyticus subsp. saprophyticus (strain ATCC 15305 / DSM 20229 / NCIMB 8711 / NCTC 7292 / S-41), this protein is Endonuclease MutS2.